The primary structure comprises 212 residues: Large ribosomal subunit protein uL3 (212 aa).

Residue Gln153 is modified to N5-methylglutamine.

The protein belongs to the universal ribosomal protein uL3 family. Part of the 50S ribosomal subunit. Forms a cluster with proteins L14 and L19. Methylated by PrmB.

Functionally, one of the primary rRNA binding proteins, it binds directly near the 3'-end of the 23S rRNA, where it nucleates assembly of the 50S subunit. This chain is Large ribosomal subunit protein uL3, found in Azoarcus sp. (strain BH72).